Here is a 125-residue protein sequence, read N- to C-terminus: MKQQGMTLLEVMVALVIFALAGLTVLKTTAQQANGLGRLEEKTFALWIAENQQAAMRLEKQWPQSQWVDGEVNFAGSLWFWRIQGIATADTRVRAIDVEVRHDRDSRAADAVLRSYLVQPGEPAQ.

A propeptide spans 1–5 (MKQQG) (leader sequence). The residue at position 6 (Met6) is an N-methylmethionine. A helical transmembrane segment spans residues 6-26 (MTLLEVMVALVIFALAGLTVL).

It belongs to the GSP I family. Type II secretion is composed of four main components: the outer membrane complex, the inner membrane complex, the cytoplasmic secretion ATPase and the periplasm-spanning pseudopilus. Interacts with core component OutG. Cleaved by prepilin peptidase. In terms of processing, methylated by prepilin peptidase at the amino group of the N-terminal methionine once the leader sequence is cleaved by prepilin peptidase.

It is found in the cell inner membrane. Component of the type II secretion system required for the energy-dependent secretion of extracellular factors such as proteases and toxins from the periplasm. Part of the pseudopilus tip complex that is critical for the recognition and binding of secretion substrates. The chain is Type II secretion system protein I (outI) from Dickeya chrysanthemi (Pectobacterium chrysanthemi).